Reading from the N-terminus, the 191-residue chain is GTP cyclohydrolase 1 (191 aa).

Residues Cys80, His83, and Cys151 each contribute to the Zn(2+) site.

Belongs to the GTP cyclohydrolase I family. Toroid-shaped homodecamer, composed of two pentamers of five dimers.

It catalyses the reaction GTP + H2O = 7,8-dihydroneopterin 3'-triphosphate + formate + H(+). Its pathway is cofactor biosynthesis; 7,8-dihydroneopterin triphosphate biosynthesis; 7,8-dihydroneopterin triphosphate from GTP: step 1/1. This chain is GTP cyclohydrolase 1, found in Nitrosospira multiformis (strain ATCC 25196 / NCIMB 11849 / C 71).